Here is a 349-residue protein sequence, read N- to C-terminus: Heat-inducible transcription repressor HrcA (349 aa).

It belongs to the HrcA family.

In terms of biological role, negative regulator of class I heat shock genes (grpE-dnaK-dnaJ and groELS operons). Prevents heat-shock induction of these operons. The chain is Heat-inducible transcription repressor HrcA from Lactobacillus acidophilus (strain ATCC 700396 / NCK56 / N2 / NCFM).